The sequence spans 721 residues: Polyribonucleotide nucleotidyltransferase (721 aa).

Asp495 and Asp501 together coordinate Mg(2+). The region spanning 562 to 621 (PRLLSFRIDPELIGTVIGPGGRTIKGITERTNTKIDIEDGGIVTIASHDGAAAEEAQKII) is the KH domain. An S1 motif domain is found at 631 to 699 (GEIFPGVVTR…SRGRINLTLR (69 aa)). Residues 702–721 (GQNGGMSYPEPTPTPVAPLS) form a disordered region. The span at 711–721 (EPTPTPVAPLS) shows a compositional bias: pro residues.

The protein belongs to the polyribonucleotide nucleotidyltransferase family. Requires Mg(2+) as cofactor.

The protein localises to the cytoplasm. The catalysed reaction is RNA(n+1) + phosphate = RNA(n) + a ribonucleoside 5'-diphosphate. Involved in mRNA degradation. Catalyzes the phosphorolysis of single-stranded polyribonucleotides processively in the 3'- to 5'-direction. The polypeptide is Polyribonucleotide nucleotidyltransferase (Prochlorococcus marinus (strain MIT 9301)).